We begin with the raw amino-acid sequence, 861 residues long: Probable beta-glucosidase A (861 aa).

Residues 1 to 19 (MKLGWIEVAALAAASVVSA) form the signal peptide. Asn62, Asn212, and Asn253 each carry an N-linked (GlcNAc...) asparagine glycan. The active site involves Asp281. 10 N-linked (GlcNAc...) asparagine glycosylation sites follow: Asn316, Asn323, Asn355, Asn443, Asn524, Asn543, Asn565, Asn669, Asn713, and Asn846.

The protein belongs to the glycosyl hydrolase 3 family.

It is found in the secreted. It catalyses the reaction Hydrolysis of terminal, non-reducing beta-D-glucosyl residues with release of beta-D-glucose.. It participates in glycan metabolism; cellulose degradation. In terms of biological role, beta-glucosidases are one of a number of cellulolytic enzymes involved in the degradation of cellulosic biomass. Catalyzes the last step releasing glucose from the inhibitory cellobiose. The chain is Probable beta-glucosidase A (bglA) from Aspergillus flavus (strain ATCC 200026 / FGSC A1120 / IAM 13836 / NRRL 3357 / JCM 12722 / SRRC 167).